The following is a 37-amino-acid chain: Antifungal protein 4 (37 aa).

The protein resides in the secreted. Possesses antifungal activity against P.infestans but not F.graminearum. The sequence is that of Antifungal protein 4 from Malva parviflora (Little mallow).